A 173-amino-acid polypeptide reads, in one-letter code: ATP synthase subunit b (173 aa).

Residues 12–32 form a helical membrane-spanning segment; that stretch reads LDVNPGLVVWTLITFLVVVLV.

Belongs to the ATPase B chain family. F-type ATPases have 2 components, F(1) - the catalytic core - and F(0) - the membrane proton channel. F(1) has five subunits: alpha(3), beta(3), gamma(1), delta(1), epsilon(1). F(0) has three main subunits: a(1), b(2) and c(10-14). The alpha and beta chains form an alternating ring which encloses part of the gamma chain. F(1) is attached to F(0) by a central stalk formed by the gamma and epsilon chains, while a peripheral stalk is formed by the delta and b chains.

It localises to the cell inner membrane. Its function is as follows. F(1)F(0) ATP synthase produces ATP from ADP in the presence of a proton or sodium gradient. F-type ATPases consist of two structural domains, F(1) containing the extramembraneous catalytic core and F(0) containing the membrane proton channel, linked together by a central stalk and a peripheral stalk. During catalysis, ATP synthesis in the catalytic domain of F(1) is coupled via a rotary mechanism of the central stalk subunits to proton translocation. In terms of biological role, component of the F(0) channel, it forms part of the peripheral stalk, linking F(1) to F(0). This Leptospira borgpetersenii serovar Hardjo-bovis (strain JB197) protein is ATP synthase subunit b.